A 179-amino-acid polypeptide reads, in one-letter code: Peptide deformylase 2 (179 aa).

Cys104 and His146 together coordinate Fe cation. Glu147 is an active-site residue. His150 lines the Fe cation pocket.

It belongs to the polypeptide deformylase family. Fe(2+) is required as a cofactor.

It catalyses the reaction N-terminal N-formyl-L-methionyl-[peptide] + H2O = N-terminal L-methionyl-[peptide] + formate. Functionally, removes the formyl group from the N-terminal Met of newly synthesized proteins. Requires at least a dipeptide for an efficient rate of reaction. N-terminal L-methionine is a prerequisite for activity but the enzyme has broad specificity at other positions. The polypeptide is Peptide deformylase 2 (Streptomyces coelicolor (strain ATCC BAA-471 / A3(2) / M145)).